The primary structure comprises 412 residues: Serine hydroxymethyltransferase (412 aa).

Residues Leu-119 and Gly-123–Leu-125 contribute to the (6S)-5,6,7,8-tetrahydrofolate site. An N6-(pyridoxal phosphate)lysine modification is found at Lys-228.

It belongs to the SHMT family. As to quaternary structure, homodimer. Pyridoxal 5'-phosphate serves as cofactor.

The protein resides in the cytoplasm. The enzyme catalyses (6R)-5,10-methylene-5,6,7,8-tetrahydrofolate + glycine + H2O = (6S)-5,6,7,8-tetrahydrofolate + L-serine. Its pathway is one-carbon metabolism; tetrahydrofolate interconversion. It functions in the pathway amino-acid biosynthesis; glycine biosynthesis; glycine from L-serine: step 1/1. In terms of biological role, catalyzes the reversible interconversion of serine and glycine with tetrahydrofolate (THF) serving as the one-carbon carrier. This reaction serves as the major source of one-carbon groups required for the biosynthesis of purines, thymidylate, methionine, and other important biomolecules. Also exhibits THF-independent aldolase activity toward beta-hydroxyamino acids, producing glycine and aldehydes, via a retro-aldol mechanism. The protein is Serine hydroxymethyltransferase of Thermodesulfovibrio yellowstonii (strain ATCC 51303 / DSM 11347 / YP87).